Reading from the N-terminus, the 165-residue chain is UPF0178 protein Bphyt_5655 (165 aa).

Disordered regions lie at residues 115 to 134 (LRGS…RDSK) and 139 to 165 (ELDR…PPTE).

It belongs to the UPF0178 family.

The protein is UPF0178 protein Bphyt_5655 of Paraburkholderia phytofirmans (strain DSM 17436 / LMG 22146 / PsJN) (Burkholderia phytofirmans).